We begin with the raw amino-acid sequence, 229 residues long: Large ribosomal subunit protein uL1 (229 aa).

This sequence belongs to the universal ribosomal protein uL1 family. Part of the 50S ribosomal subunit.

Binds directly to 23S rRNA. The L1 stalk is quite mobile in the ribosome, and is involved in E site tRNA release. Its function is as follows. Protein L1 is also a translational repressor protein, it controls the translation of the L11 operon by binding to its mRNA. This is Large ribosomal subunit protein uL1 from Pediococcus pentosaceus (strain ATCC 25745 / CCUG 21536 / LMG 10740 / 183-1w).